A 383-amino-acid chain; its full sequence is Centractin (383 aa).

Residues 227-246 form a disordered region; sequence PQKEEELLEPDSSSSKPVQP.

It belongs to the actin family. ARP1 subfamily.

The protein resides in the cytoplasm. The protein localises to the cytoskeleton. It localises to the microtubule organizing center. It is found in the centrosome. In terms of biological role, component of a multi-subunit complex, PPK2 (poly P kinase complex 2) involved in microtubule based vesicle motility. It is associated with the centrosome. PPK2 complex can synthesize a poly chain of hundreds of phosphate residues linked by ATP-like bonds. The sequence is that of Centractin (arpA) from Dictyostelium discoideum (Social amoeba).